Consider the following 267-residue polypeptide: Hydroxyethylthiazole kinase 2 (267 aa).

Met-41 contacts substrate. Residues Lys-116 and Thr-166 each contribute to the ATP site. Residue Gly-193 participates in substrate binding.

Belongs to the Thz kinase family. Mg(2+) serves as cofactor.

The enzyme catalyses 5-(2-hydroxyethyl)-4-methylthiazole + ATP = 4-methyl-5-(2-phosphooxyethyl)-thiazole + ADP + H(+). It functions in the pathway cofactor biosynthesis; thiamine diphosphate biosynthesis; 4-methyl-5-(2-phosphoethyl)-thiazole from 5-(2-hydroxyethyl)-4-methylthiazole: step 1/1. Catalyzes the phosphorylation of the hydroxyl group of 4-methyl-5-beta-hydroxyethylthiazole (THZ). This is Hydroxyethylthiazole kinase 2 from Streptococcus pneumoniae (strain Hungary19A-6).